The following is a 36-amino-acid chain: Photosystem I reaction center subunit VIII (36 aa).

The helical transmembrane segment at 6 to 28 threads the bilayer; sequence FPSVLVPLVGLVFPAMAMASLSL.

This sequence belongs to the PsaI family.

The protein localises to the plastid. It localises to the chloroplast thylakoid membrane. In terms of biological role, may help in the organization of the PsaL subunit. In Panax ginseng (Korean ginseng), this protein is Photosystem I reaction center subunit VIII.